We begin with the raw amino-acid sequence, 243 residues long: Probable transcriptional regulatory protein BG0025 (243 aa).

Belongs to the TACO1 family.

Its subcellular location is the cytoplasm. The protein is Probable transcriptional regulatory protein BG0025 of Borrelia garinii subsp. bavariensis (strain ATCC BAA-2496 / DSM 23469 / PBi) (Borreliella bavariensis).